A 166-amino-acid polypeptide reads, in one-letter code: Large ribosomal subunit protein uL11 (166 aa).

It belongs to the universal ribosomal protein uL11 family.

In terms of biological role, this protein binds directly to 26S ribosomal RNA. In Prunus armeniaca (Apricot), this protein is Large ribosomal subunit protein uL11 (RPL12).